A 408-amino-acid chain; its full sequence is 26S proteasome regulatory subunit 6B homolog (408 aa).

N-acetylalanine is present on A2. At S16 the chain carries Phosphoserine. A coiled-coil region spans residues E28–V75. G196–T203 serves as a coordination point for ATP.

It belongs to the AAA ATPase family. Component of the 19S regulatory particle (RP/PA700) base subcomplex of the 26S proteasome. The 26S proteasome is composed of a core protease (CP), known as the 20S proteasome, capped at one or both ends by the 19S regulatory particle (RP/PA700). The RP/PA700 complex is composed of at least 17 different subunits in two subcomplexes, the base and the lid, which form the portions proximal and distal to the 20S proteolytic core, respectively. Expressed in dark-grown etiolated seedlings, roots, leaves, stems and flowers.

Its subcellular location is the cytoplasm. It localises to the nucleus. The 26S proteasome is involved in the ATP-dependent degradation of ubiquitinated proteins. The regulatory (or ATPase) complex confers ATP dependency and substrate specificity to the 26S complex. This Arabidopsis thaliana (Mouse-ear cress) protein is 26S proteasome regulatory subunit 6B homolog (RPT3).